The sequence spans 513 residues: ATP synthase subunit alpha (513 aa).

169–176 serves as a coordination point for ATP; sequence GDRQCGKT.

This sequence belongs to the ATPase alpha/beta chains family. As to quaternary structure, F-type ATPases have 2 components, CF(1) - the catalytic core - and CF(0) - the membrane proton channel. CF(1) has five subunits: alpha(3), beta(3), gamma(1), delta(1), epsilon(1). CF(0) has three main subunits: a(1), b(2) and c(9-12). The alpha and beta chains form an alternating ring which encloses part of the gamma chain. CF(1) is attached to CF(0) by a central stalk formed by the gamma and epsilon chains, while a peripheral stalk is formed by the delta and b chains.

It localises to the cell inner membrane. It catalyses the reaction ATP + H2O + 4 H(+)(in) = ADP + phosphate + 5 H(+)(out). Produces ATP from ADP in the presence of a proton gradient across the membrane. The alpha chain is a regulatory subunit. This is ATP synthase subunit alpha from Burkholderia ambifaria (strain MC40-6).